The following is a 60-amino-acid chain: Myrmicitoxin(1)-Pr4c (60 aa).

The signal sequence occupies residues Met1 to Gly23. The propeptide occupies Glu24–Ser33. Gln59 carries the glutamine amide modification.

Belongs to the formicidae venom clade 2 family. In terms of tissue distribution, expressed by the venom gland.

Its subcellular location is the secreted. Its function is as follows. Toxin that causes a rapid and irreversible paralysis when intrathoracically injected into insects (blowflies). Does not cause spontaneous nocifensive behaviors by intraplantar injection in mice. In Pogonomyrmex rugosus (Desert harvester ant), this protein is Myrmicitoxin(1)-Pr4c.